Here is a 229-residue protein sequence, read N- to C-terminus: Cytidylate kinase (229 aa).

12–20 (GPSGAGKGT) is an ATP binding site.

It belongs to the cytidylate kinase family. Type 1 subfamily.

The protein resides in the cytoplasm. The enzyme catalyses CMP + ATP = CDP + ADP. The catalysed reaction is dCMP + ATP = dCDP + ADP. This Pseudomonas aeruginosa (strain LESB58) protein is Cytidylate kinase.